A 473-amino-acid polypeptide reads, in one-letter code: DNA-binding protein (473 aa).

2 disordered regions span residues 1–69 (MAGR…GFSH) and 85–111 (RRLEPKGVPPPSEENNEEEEPSTSKAV). Residues 7-18 (ELPTITPYLQET) show a composition bias toward polar residues. Over residues 53–62 (PDSEEEEEEV) the composition is skewed to acidic residues. Phosphotyrosine; by host is present on Y141. 2 residues coordinate Zn(2+): C230 and H232. Residues 243–277 (VEMDVASENAQRALKEHPSRAKVVQNRWGRSVVQL) form a flexible loop region. Positions 285, 301, 342, 344, 396, and 412 each coordinate Zn(2+). A C-terminal arm, DBP binding region spans residues 459 to 473 (VALPASHGDGEKEPF).

The protein belongs to the adenoviridae E2A DNA-binding protein family. In terms of assembly, homomultimerizes on viral ssDNA bound to pTP. Forms a initiation complex with viral polymerase, pTP and hosts NFIA and POU2F1/OCT1. Interacts with host SRCAP.

It localises to the host nucleus. Its function is as follows. Plays a role in the elongation phase of viral strand displacement replication by unwinding the template in an ATP-independent fashion, employing its capacity to form multimers. Also enhances the rate of initiation. Released from template upon second strand synthesis. Assembles in complex with viral pTP, viral pol, host NFIA and host POU2F1/OCT1 on viral origin of replication. Covers the whole ssDNA genome during synthesis. The complementary strand synthesis induces its relese from DNA template. May inhibit cellular transcription mediated by the interaction between host SRCAP and CBP. The sequence is that of DNA-binding protein from Homo sapiens (Human).